The chain runs to 3371 residues: Protocadherin-23 (3371 aa).

The tract at residues 1–40 (MSPCGRKMGEGRQQRRAPVGKLLLLPGRRDTPHGRSGSSG) is disordered. The Cytoplasmic segment spans residues 1–46 (MSPCGRKMGEGRQQRRAPVGKLLLLPGRRDTPHGRSGSSGARTQRS). The helical transmembrane segment at 47-67 (LLWLLVHVWLWAASGSSAQLF) threads the bilayer. Cadherin domains are found at residues 65 to 167 (QLFN…SPRF), 168 to 296 (PLDS…PPVF), 297 to 413 (EQDE…RPAI), 424 to 539 (ARVS…PPLF), 540 to 663 (SQQH…EPIF), 664 to 771 (WRQV…HPVF), 772 to 881 (NPST…RPKY), 877 to 979 (ERPK…HPAF), 980 to 1082 (LRTS…SPSW), 1085 to 1191 (EHLV…SPTF), 1192 to 1294 (LHDV…RPFF), 1299 to 1415 (PGKE…IPEN), 1404 to 1510 (SQNI…SPSF), 1511 to 1620 (QDEL…NPTF), 1620 to 1724 (FISF…APVF), 1725 to 1829 (KQHL…APEF), 1830 to 1933 (IVSS…SPSF), 1934 to 2038 (PTLY…DPVL), 2039 to 2130 (EQNP…VIHM), 2140 to 2242 (SHHL…SPCF), 2243 to 2347 (EQSI…APAF), 2347 to 2447 (FLPS…PPVF), 2448 to 2549 (SQDF…APEF), 2550 to 2665 (TVKS…PPNF), 2666 to 2769 (SSLS…APQF), 2770 to 2880 (MFSS…EPIF), and 2881 to 2988 (TQDQ…TPLA). Topologically, residues 68–2986 (NLTLSVDEGL…NVSFSSEGTP (2919 aa)) are extracellular. Residues N669, N772, N814, N905, N966, N1038, N1172, and N1275 are each glycosylated (N-linked (GlcNAc...) asparagine). Residues N1487, N1595, N1617, and N1664 are each glycosylated (N-linked (GlcNAc...) asparagine). A glycan (N-linked (GlcNAc...) asparagine) is linked at N1898. N-linked (GlcNAc...) asparagine glycosylation is found at N2054, N2070, and N2098. N2329 carries an N-linked (GlcNAc...) asparagine glycan. 4 N-linked (GlcNAc...) asparagine glycosylation sites follow: N2479, N2497, N2555, and N2664. 2 N-linked (GlcNAc...) asparagine glycosylation sites follow: N2929 and N2977. A helical membrane pass occupies residues 2987–3017 (LAVFASSFSISLVVSFLVFLILICILIVMIL). The Cytoplasmic segment spans residues 3018–3371 (RHKQKDTINN…ELKAEDEVQI (354 aa)). Over residues 3117-3140 (KCSDSALSDHESRVPDSGIPRDSD) the composition is skewed to basic and acidic residues. Residues 3117–3141 (KCSDSALSDHESRVPDSGIPRDSDQ) form a disordered region.

As to expression, cerebral cortex and testis.

Its subcellular location is the membrane. Its function is as follows. Calcium-dependent cell-adhesion protein. This chain is Protocadherin-23 (DCHS2), found in Homo sapiens (Human).